Here is a 342-residue protein sequence, read N- to C-terminus: Sorting nexin-15 (342 aa).

Positions 1–130 (MSRQAKDDFL…EFFRGGEVTR (130 aa)) constitute a PX domain. Arg51, Ser53, Arg87, and Arg96 together coordinate a 1,2-diacyl-sn-glycero-3-phospho-(1D-myo-inositol-3-phosphate). Arg105 is subject to Omega-N-methylarginine. Residues Ser201 and Ser227 each carry the phosphoserine modification. Residues 245–267 (DQEPWEPGGQEEEEDGEGGPTPA) form a disordered region. Residues 265–342 (TPAYLSQATE…LRLHLSQLPP (78 aa)) form the MIT domain.

This sequence belongs to the sorting nexin family. As to quaternary structure, homodimer. Interacts with SNX1, SNX2 and SNX4. As to expression, widely expressed.

The protein localises to the cytoplasm. It localises to the membrane. The protein resides in the cytoplasmic vesicle membrane. In terms of biological role, may be involved in several stages of intracellular trafficking. Overexpression of SNX15 disrupts the normal trafficking of proteins from the plasma membrane to recycling endosomes or the TGN. This Homo sapiens (Human) protein is Sorting nexin-15 (SNX15).